The chain runs to 291 residues: N-acetylmannosamine kinase (291 aa).

ATP-binding positions include 5–12 (AIDIGGTK) and 132–139 (GVGGGVVC). Residues H156, C166, C168, and C173 each coordinate Zn(2+).

This sequence belongs to the ROK (NagC/XylR) family. NanK subfamily. As to quaternary structure, homodimer.

The catalysed reaction is an N-acyl-D-mannosamine + ATP = an N-acyl-D-mannosamine 6-phosphate + ADP + H(+). It participates in amino-sugar metabolism; N-acetylneuraminate degradation; D-fructose 6-phosphate from N-acetylneuraminate: step 2/5. Its function is as follows. Catalyzes the phosphorylation of N-acetylmannosamine (ManNAc) to ManNAc-6-P. The chain is N-acetylmannosamine kinase from Salmonella dublin (strain CT_02021853).